A 188-amino-acid chain; its full sequence is Elongation factor P (188 aa).

Lys-34 carries the post-translational modification N6-(3,6-diaminohexanoyl)-5-hydroxylysine.

This sequence belongs to the elongation factor P family. In terms of processing, is beta-lysylated on the epsilon-amino group of Lys-34 by the combined action of EpmA and EpmB, and then hydroxylated on the C5 position of the same residue by EpmC. Lysylation is critical for the stimulatory effect of EF-P on peptide-bond formation. The lysylation moiety would extend toward the peptidyltransferase center and stabilize the terminal 3-CCA end of the tRNA. The hydroxylation of the C5 position on Lys-34 would allow additional potential stabilizing hydrogen-bond interactions with the P-tRNA.

Its subcellular location is the cytoplasm. It functions in the pathway protein biosynthesis; polypeptide chain elongation. Its function is as follows. Involved in peptide bond synthesis. Alleviates ribosome stalling that occurs when 3 or more consecutive Pro residues or the sequence PPG is present in a protein, possibly by augmenting the peptidyl transferase activity of the ribosome. Modification of Lys-34 is required for alleviation. The chain is Elongation factor P from Salmonella arizonae (strain ATCC BAA-731 / CDC346-86 / RSK2980).